A 220-amino-acid polypeptide reads, in one-letter code: 1-Cys peroxiredoxin B (220 aa).

Residues 4 to 165 (LTLGDVVPDL…VLRATDALLT (162 aa)) enclose the Thioredoxin domain. Residue cysteine 46 is the Cysteine sulfenic acid (-SOH) intermediate of the active site. The Bipartite nuclear localization signal motif lies at 195 to 218 (KARFPAGFETAQLPSNKCYLRFTQ).

It belongs to the peroxiredoxin family. Prx6 subfamily.

The protein resides in the nucleus. The protein localises to the cytoplasm. It catalyses the reaction a hydroperoxide + [thioredoxin]-dithiol = an alcohol + [thioredoxin]-disulfide + H2O. Thiol-specific peroxidase that catalyzes the reduction of hydrogen peroxide and organic hydroperoxides to water and alcohols, respectively. Seems to contribute to the inhibition of germination during stress. The chain is 1-Cys peroxiredoxin B from Oryza sativa subsp. indica (Rice).